We begin with the raw amino-acid sequence, 284 residues long: Tropomyosin alpha-1 chain (284 aa).

Position 1 is an N-acetylmethionine (M1). Residues 1-38 (MDAIKKKMQMLKLDKENALDRAEQAEADKKAAEDRSKQ) form a disordered region. Residues 1–284 (MDAIKKKMQM…DHALNDMTSI (284 aa)) adopt a coiled-coil conformation. Residues 12–38 (KLDKENALDRAEQAEADKKAAEDRSKQ) are compositionally biased toward basic and acidic residues. A phosphoserine mark is found at A31, S45, and K51. The disordered stretch occupies residues 116-136 (AEKAADESERGMKVIESRAQK). Phosphoserine is present on residues S174, S186, and S206. An N6-acetyllysine modification is found at K213. A Phosphoserine modification is found at S252. Y261 is subject to Phosphotyrosine. At S271 the chain carries Phosphoserine. The residue at position 283 (S283) is a Phosphoserine; by DAPK1.

Belongs to the tropomyosin family. Homodimer. Heterodimer of an alpha (TPM1, TPM3 or TPM4) and a beta (TPM2) chain. Interacts with HRG (via the HRR domain); the interaction contributes to the antiangiogenic properties of the histidine/proline-rich region (HRR) of HRG. Interacts (via N-terminus) with LMOD2 (via N-terminus) and TMOD1 (via N-terminus). Post-translationally, phosphorylated at Ser-283 by DAPK1 in response to oxidative stress and this phosphorylation enhances stress fiber formation in endothelial cells. Detected in primary breast cancer tissues but undetectable in normal breast tissues in Sudanese patients. Isoform 1 is expressed in adult and fetal skeletal muscle and cardiac tissues, with higher expression levels in the cardiac tissues. Isoform 10 is expressed in adult and fetal cardiac tissues, but not in skeletal muscle.

It localises to the cytoplasm. The protein localises to the cytoskeleton. Binds to actin filaments in muscle and non-muscle cells. Plays a central role, in association with the troponin complex, in the calcium dependent regulation of vertebrate striated muscle contraction. Smooth muscle contraction is regulated by interaction with caldesmon. In non-muscle cells is implicated in stabilizing cytoskeleton actin filaments. This Homo sapiens (Human) protein is Tropomyosin alpha-1 chain (TPM1).